Consider the following 636-residue polypeptide: MAAAEVPVPSGYFTQIKEQKLKPGDLEEEKEEDGVQRVEAQEGVVKEVEAENSCLLLEARAPVESDRRILTLQTVHLESQDVHLQGLGWLSVPHSEELSGTVPEAEGILQLPSVLWLDPEPQLSLQHCVTVSIPEELYPPEELQRIHFHLLRENVLMAEENPELTPDLDESTALKKPEEDEKDQLPPQGETDKREERLLLLEMKPKEGKDDEIVLTISHLSLEEQQDPPAANQTSVPGAKAAKPKRRRQTKGKPQSFQCDTCPFTSSKLSTFNRHIKIHSNERPHLCHLCLKAFRTVTLLRNHVNTHTGTRPHKCRDCDMAFVTSGELVRHRRYKHTYEKPFKCSLCKYASVEASKMKRHIRSHTGERPFQCCQCAYASRDSYKLKRHMRTHSGEKPYECPTCHVRFTQSGTMKIHIAQKHGENVPKYECPHCATIIARKSDLRVHLRNLHSQSPEEMKCRYCPAGFHERYALIQHQRTHKNEKKFKCKQCDYACKQERCLKAHMRMHTGEKPFSCLACNKHFRQKQLLTVHLRKYHDPNFVPNLHLCLKCDKRFSRWSNLQRHRKKCDPEHETLAPNKDRRPVTRTQASEGEAGHKEGEPQCPGEQALGHQGEAAGSQSPDHGLTCEIIFNMMDK.

3 disordered regions span residues 17-38 (KEQK…VQRV), 160-195 (ENPE…DKRE), and 222-257 (LEEQ…PQSF). The segment covering 160-170 (ENPELTPDLDE) has biased composition (acidic residues). Residues 242–251 (AKPKRRRQTK) show a composition bias toward basic residues. 11 C2H2-type zinc fingers span residues 257–279 (FQCD…IKIH), 285–307 (HLCH…VNTH), 313–336 (HKCR…RYKH), 342–364 (FKCS…IRSH), 370–392 (FQCC…MRTH), 398–421 (YECP…AQKH), 428–451 (YECP…RNLH), 458–480 (MKCR…QRTH), 486–508 (FKCK…MRMH), 514–537 (FSCL…RKYH), and 546–572 (HLCL…DPEH). The segment at 562–624 (QRHRKKCDPE…AAGSQSPDHG (63 aa)) is disordered. Basic and acidic residues predominate over residues 568-583 (CDPEHETLAPNKDRRP).

It belongs to the CTCF zinc-finger protein family. In terms of assembly, interacts with histones, PRMT7 and SETD1A. Interacts (via N-terminus) with BAG6/BAT3. Testis-specific.

The protein resides in the cytoplasm. It localises to the nucleus. Functionally, testis-specific DNA binding protein responsible for insulator function, nuclear architecture and transcriptional control, which probably acts by recruiting epigenetic chromatin modifiers. Plays a key role in gene imprinting in male germline, by participating in the establishment of differential methylation at the IGF2/H19 imprinted control region (ICR). Directly binds the unmethylated H19 ICR and recruits the PRMT7 methyltransferase, leading to methylate histone H4 'Arg-3' to form H4R3sme2. This probably leads to recruit de novo DNA methyltransferases at these sites. Seems to act as tumor suppressor. In association with DNMT1 and DNMT3B, involved in activation of BAG1 gene expression by binding to its promoter. Required for dimethylation of H3 lysine 4 (H3K4me2) of MYC and BRCA1 promoters. This is Transcriptional repressor CTCFL (Ctcfl) from Mus musculus (Mouse).